We begin with the raw amino-acid sequence, 406 residues long: Leucine aminopeptidase 1 (406 aa).

A signal peptide spans 1-18 (MKVTNASLLALLLPAVSG). Positions 19–94 (RFVETGEPDR…LRAMTASRKK (76 aa)) are excised as a propeptide. N-linked (GlcNAc...) asparagine glycosylation occurs at asparagine 186. Zn(2+) is bound by residues histidine 194, aspartate 213, glutamate 252, and aspartate 279. Asparagine 306 carries an N-linked (GlcNAc...) asparagine glycan. An intrachain disulfide couples cysteine 328 to cysteine 332. Zn(2+) is bound at residue histidine 361.

It belongs to the peptidase M28 family. M28E subfamily. In terms of assembly, monomer. The cofactor is Zn(2+).

Its subcellular location is the secreted. Its function is as follows. Extracellular aminopeptidase that allows assimilation of proteinaceous substrates. The protein is Leucine aminopeptidase 1 (LAP1) of Chaetomium globosum (strain ATCC 6205 / CBS 148.51 / DSM 1962 / NBRC 6347 / NRRL 1970) (Soil fungus).